The primary structure comprises 425 residues: Glutamyl-tRNA(Gln) amidotransferase subunit A (425 aa).

Catalysis depends on charge relay system residues lysine 29 and serine 104. The active-site Acyl-ester intermediate is the serine 128.

This sequence belongs to the amidase family. GatA subfamily. Heterotrimer of A, B and C subunits.

The enzyme catalyses L-glutamyl-tRNA(Gln) + L-glutamine + ATP + H2O = L-glutaminyl-tRNA(Gln) + L-glutamate + ADP + phosphate + H(+). In terms of biological role, allows the formation of correctly charged Gln-tRNA(Gln) through the transamidation of misacylated Glu-tRNA(Gln) in organisms which lack glutaminyl-tRNA synthetase. The reaction takes place in the presence of glutamine and ATP through an activated gamma-phospho-Glu-tRNA(Gln). This is Glutamyl-tRNA(Gln) amidotransferase subunit A from Haloarcula marismortui (strain ATCC 43049 / DSM 3752 / JCM 8966 / VKM B-1809) (Halobacterium marismortui).